Consider the following 452-residue polypeptide: Probable M18 family aminopeptidase 1 (452 aa).

Zn(2+)-binding residues include His-93, His-168, and His-427.

This sequence belongs to the peptidase M18 family. It depends on Zn(2+) as a cofactor.

The protein is Probable M18 family aminopeptidase 1 (apeA) of Thermotoga neapolitana.